The chain runs to 272 residues: Putative pyruvate, phosphate dikinase regulatory protein (272 aa).

147 to 154 (GLSRTSKT) is an ADP binding site.

This sequence belongs to the pyruvate, phosphate/water dikinase regulatory protein family. PDRP subfamily.

It carries out the reaction N(tele)-phospho-L-histidyl/L-threonyl-[pyruvate, phosphate dikinase] + ADP = N(tele)-phospho-L-histidyl/O-phospho-L-threonyl-[pyruvate, phosphate dikinase] + AMP + H(+). The enzyme catalyses N(tele)-phospho-L-histidyl/O-phospho-L-threonyl-[pyruvate, phosphate dikinase] + phosphate + H(+) = N(tele)-phospho-L-histidyl/L-threonyl-[pyruvate, phosphate dikinase] + diphosphate. Its function is as follows. Bifunctional serine/threonine kinase and phosphorylase involved in the regulation of the pyruvate, phosphate dikinase (PPDK) by catalyzing its phosphorylation/dephosphorylation. The sequence is that of Putative pyruvate, phosphate dikinase regulatory protein from Clostridium botulinum (strain Alaska E43 / Type E3).